The chain runs to 639 residues: MIHITLPDGSQREFAGPVTVAEVAASIGSGLAKAALAGKIGDKVVDTSYQITQDSPLSIVTAKDADGLEVIRHSTAHLLAYAVKELFPDAQVTIGPVIENGFYYDFSYKRPFTPEDLAAIEKRMAELAAKDEPVVRRVLPRDEAVAYFKGLGEHYKAEIIASIPTNEDVSLYREGGFEDLCRGPHVPSTGKLKFFKLMKVAGAYWRGDHRNEMLQRVYGTAWATKEELQQYLHMLEEAEKRDHRKLGRELDLFHIDEHSPGTVFWHPKGWTLWQEVEQYMRRVYRDNGYQEVKGPQILDKTLWEKTGHWDKYRDNMFTTESEKRDYALKPMNCPGHILIFKQGIKSYRDLPLRYGEFGQCHRNEPTGGLHGIMRVRGFTQDDGHIFCTEDHILAECTAYTALLQKVYKNFGFHNIIYKVATRPEARIGSDESWDKAEHALMESLRASGCEFEIAPGDGAFYGPKIEYTLKDAIGRQWQCGTMQVDFSMPERLDAEYVGEDGGRHRPVMLHRAIVGSLERFIGILIEEHAGALPVWLAPVQVAVLNITDAQQDYCREIAAKLQKALPNQGLRVVTDLRNEKITYKIREHSLQKLPYILVAGDKEKAAGAVAVRARGNKDLGVMSLDAFVDLIAQDIASKV.

One can recognise a TGS domain in the interval 1-61 (MIHITLPDGS…TQDSPLSIVT (61 aa)). A catalytic region spans residues 242 to 533 (DHRKLGRELD…LIEEHAGALP (292 aa)). Zn(2+) is bound by residues C333, H384, and H510.

The protein belongs to the class-II aminoacyl-tRNA synthetase family. In terms of assembly, homodimer. It depends on Zn(2+) as a cofactor.

It is found in the cytoplasm. The catalysed reaction is tRNA(Thr) + L-threonine + ATP = L-threonyl-tRNA(Thr) + AMP + diphosphate + H(+). Functionally, catalyzes the attachment of threonine to tRNA(Thr) in a two-step reaction: L-threonine is first activated by ATP to form Thr-AMP and then transferred to the acceptor end of tRNA(Thr). Also edits incorrectly charged L-seryl-tRNA(Thr). The polypeptide is Threonine--tRNA ligase (Acidovorax ebreus (strain TPSY) (Diaphorobacter sp. (strain TPSY))).